Here is a 149-residue protein sequence, read N- to C-terminus: Flagellar assembly factor FliW (149 aa).

This sequence belongs to the FliW family. In terms of assembly, interacts with translational regulator CsrA and flagellin(s).

The protein localises to the cytoplasm. Its function is as follows. Acts as an anti-CsrA protein, binds CsrA and prevents it from repressing translation of its target genes, one of which is flagellin. Binds to flagellin and participates in the assembly of the flagellum. The chain is Flagellar assembly factor FliW from Thermotoga maritima (strain ATCC 43589 / DSM 3109 / JCM 10099 / NBRC 100826 / MSB8).